The sequence spans 88 residues: Small ribosomal subunit protein uS15c (88 aa).

Belongs to the universal ribosomal protein uS15 family. In terms of assembly, part of the 30S ribosomal subunit.

The protein resides in the plastid. It localises to the chloroplast. In Lepidium virginicum (Virginia pepperweed), this protein is Small ribosomal subunit protein uS15c (rps15).